The following is a 307-amino-acid chain: Nodulation protein NoeC (307 aa).

8 helical membrane-spanning segments follow: residues 46-66 (APLWLAFMTFCSVASGIYVLN), 91-111 (SGLTGVWMCLVLIALGGVCAI), 117-137 (LFAITASYVALSVIYVGKVRG), 140-160 (VLDLFVLSALYTTRILAGATA), 163-183 (IPVPASFLAFSAMAFVSLASI), 212-232 (IVALICVSAGYAAVVFLELFV), 238-258 (AQGPAPIFVSNAMCVVVAYWI), and 279-299 (VTDGSSLVCILGLALGLVFLM).

The protein localises to the cell membrane. The sequence is that of Nodulation protein NoeC (noeC) from Azorhizobium caulinodans (strain ATCC 43989 / DSM 5975 / JCM 20966 / LMG 6465 / NBRC 14845 / NCIMB 13405 / ORS 571).